Consider the following 147-residue polypeptide: Hemoglobin subunit delta (147 aa).

The Globin domain maps to 3-147 (HLTPDEKNAV…VATALAHKYH (145 aa)). Phosphoserine is present on serine 51. Residues histidine 64 and histidine 93 each coordinate heme b.

This sequence belongs to the globin family. As to quaternary structure, heterotetramer of two delta chains and two alpha chains. In terms of tissue distribution, red blood cells.

This chain is Hemoglobin subunit delta (HBD), found in Otolemur crassicaudatus (Brown greater galago).